Consider the following 828-residue polypeptide: Periplasmic nitrate reductase (828 aa).

The tat-type signal signal peptide spans 1-31 (MKLSRRSFMKANAVAAAAAAAGLSVPGVARA). Residues 39 to 95 (IKWDKAPCRFCGTGCGVLVGTQQGRIVACQGDPDAPVNRGLNCIKGYFLPKIMYGKD) enclose the 4Fe-4S Mo/W bis-MGD-type domain. Residues Cys46, Cys49, Cys53, and Cys81 each contribute to the [4Fe-4S] cluster site. Residues Lys83, Gln150, Asn175, Cys179, 212 to 219 (WGSNMAEM), 243 to 247 (STFQH), 262 to 264 (QSD), Met372, Gln376, Asn482, 508 to 509 (SD), Lys531, Asp558, and 718 to 727 (TGRVLEHWHT) contribute to the Mo-bis(molybdopterin guanine dinucleotide) site. Phe794 contacts substrate. Mo-bis(molybdopterin guanine dinucleotide) is bound by residues Asn802 and Lys819.

The protein belongs to the prokaryotic molybdopterin-containing oxidoreductase family. NasA/NapA/NarB subfamily. As to quaternary structure, component of the periplasmic nitrate reductase NapAB complex composed of NapA and NapB. It depends on [4Fe-4S] cluster as a cofactor. Mo-bis(molybdopterin guanine dinucleotide) is required as a cofactor. Post-translationally, predicted to be exported by the Tat system. The position of the signal peptide cleavage has not been experimentally proven.

The protein resides in the periplasm. It catalyses the reaction 2 Fe(II)-[cytochrome] + nitrate + 2 H(+) = 2 Fe(III)-[cytochrome] + nitrite + H2O. In terms of biological role, catalytic subunit of the periplasmic nitrate reductase complex NapAB. Receives electrons from NapB and catalyzes the reduction of nitrate to nitrite. This chain is Periplasmic nitrate reductase, found in Citrobacter koseri (strain ATCC BAA-895 / CDC 4225-83 / SGSC4696).